The following is a 728-amino-acid chain: Protein Hook homolog 1 (728 aa).

Residue M1 is modified to N-acetylmethionine. The interval 1–555 (MEDPQPLPQS…LKQKLEAHME (555 aa)) is sufficient for interaction with microtubules. Residues 12–128 (LPLCDSLIIW…RLLQLILGCA (117 aa)) enclose the Calponin-homology (CH) domain. Coiled-coil stretches lie at residues 168-443 (PASD…LNQA) and 477-658 (LRLQ…AKLR). A Phosphoserine modification is found at S235. Positions 481-510 (QEGTENERIEQLQEQLEQKHRKMNELETEQ) are disordered. Positions 657–728 (LRDYEEKLIV…SVKVPAAASD (72 aa)) are sufficient for interaction with AKTIP and VPS18. Residues S719 and S727 each carry the phosphoserine modification.

It belongs to the hook family. Self-associates. Component of the FTS/Hook/FHIP complex (FHF complex), composed of AKTIP/FTS, FHIP1B, and one or more members of the Hook family of proteins HOOK1, HOOK2, and HOOK3. Interacts directly with AKTIP/FTS, HOOK2 and HOOK3. Associates with several subunits of the homotypic vesicular sorting complex (the HOPS complex) including VPS16, VPS18, VPS39 and VPS41; these interactions may be indirect. Interacts with CCDC181. Interacts (via coiled-coil region) with RIMBP3 (via C-terminus). Interacts with LRGUK (via guanylate kinase-like domain). Interacts with microtubules. May interacts with CLN3. Interacts with AP4M1; the interaction is direct, mediates the interaction between FTS-Hook-FHIP (FHF) complex and AP-4 and the perinuclear distribution of AP-4. As to expression, mainly expressed in testis.

It localises to the cytoplasm. The protein localises to the cytoskeleton. Component of the FTS/Hook/FHIP complex (FHF complex). The FHF complex may function to promote vesicle trafficking and/or fusion via the homotypic vesicular protein sorting complex (the HOPS complex). FHF complex promotes the distribution of AP-4 complex to the perinuclear area of the cell. Required for spermatid differentiation. Probably involved in the positioning of the microtubules of the manchette and the flagellum in relation to the membrane skeleton. The protein is Protein Hook homolog 1 (Hook1) of Mus musculus (Mouse).